Reading from the N-terminus, the 1179-residue chain is Putative ankyrin repeat protein RF_0381 (1179 aa).

ANK repeat units follow at residues 282–311, 604–633, 637–666, 670–699, 703–732, 736–765, 769–798, 802–831, 833–860, 864–893, 897–926, 930–959, 963–992, 996–1025, 1029–1058, 1062–1091, 1095–1124, and 1128–1157; these read NGYQ…MHRQ, NKDQ…NPNA, HGVI…DVNA, NGET…NIHA, NGET…DVNA, NGLT…DVNA, SGET…DVNA, NGET…NVNN, KTIL…DIHA, SGET…DIHA, SGET…DINT, DGLT…DVNA, and SGET…DINL.

This chain is Putative ankyrin repeat protein RF_0381, found in Rickettsia felis (strain ATCC VR-1525 / URRWXCal2) (Rickettsia azadi).